Consider the following 79-residue polypeptide: Small ribosomal subunit protein uS17 (79 aa).

Belongs to the universal ribosomal protein uS17 family. As to quaternary structure, part of the 30S ribosomal subunit.

In terms of biological role, one of the primary rRNA binding proteins, it binds specifically to the 5'-end of 16S ribosomal RNA. The protein is Small ribosomal subunit protein uS17 of Rhizobium leguminosarum bv. trifolii (strain WSM2304).